The following is a 510-amino-acid chain: NAD(P)H-quinone oxidoreductase subunit 2 B, chloroplastic (510 aa).

13 consecutive transmembrane segments (helical) span residues 24-44 (LLLF…GLIL), 57-77 (IPWL…ALLF), 99-119 (IFQF…VEYI), 124-144 (MAIT…MFLC), 150-170 (ITIF…SGYT), 183-203 (YLLM…WLYG), 227-247 (PGIS…LSPA), 295-315 (WHLL…LIAI), 323-343 (MLAY…IVGD), 347-367 (GYAS…GTFA), 395-415 (ALSS…AGFF), 418-438 (LHLF…IGLL), and 484-504 (MIVC…IIAI).

The protein belongs to the complex I subunit 2 family. As to quaternary structure, NDH is composed of at least 16 different subunits, 5 of which are encoded in the nucleus.

The protein localises to the plastid. The protein resides in the chloroplast thylakoid membrane. It catalyses the reaction a plastoquinone + NADH + (n+1) H(+)(in) = a plastoquinol + NAD(+) + n H(+)(out). It carries out the reaction a plastoquinone + NADPH + (n+1) H(+)(in) = a plastoquinol + NADP(+) + n H(+)(out). Its function is as follows. NDH shuttles electrons from NAD(P)H:plastoquinone, via FMN and iron-sulfur (Fe-S) centers, to quinones in the photosynthetic chain and possibly in a chloroplast respiratory chain. The immediate electron acceptor for the enzyme in this species is believed to be plastoquinone. Couples the redox reaction to proton translocation, and thus conserves the redox energy in a proton gradient. The polypeptide is NAD(P)H-quinone oxidoreductase subunit 2 B, chloroplastic (Liriodendron tulipifera (Tuliptree)).